The following is a 553-amino-acid chain: Putative transport protein YidE (553 aa).

Transmembrane regions (helical) follow at residues 4–24 (IALT…IGNI), 28–48 (GVGF…HFVD), 65–85 (FGLI…FFAS), 95–115 (LFAV…HKIF), and 158–178 (MSYA…MWLM). RCK C-terminal domains are found at residues 192-276 (KHES…VIGK) and 279-361 (DTSL…VVGN). 6 consecutive transmembrane segments (helical) span residues 371 to 391 (MLPV…PLFV), 393 to 413 (GFPV…ALIL), 437 to 457 (LGIV…FVDT), 464 to 484 (LSWI…IGLL), 493 to 513 (YLTL…LAFA), and 533 to 553 (LVMF…WGMG).

Belongs to the AAE transporter (TC 2.A.81) family. YidE subfamily.

The protein localises to the cell membrane. The polypeptide is Putative transport protein YidE (Salmonella paratyphi C (strain RKS4594)).